The chain runs to 226 residues: P24 oleosin isoform A (226 aa).

A polar region spans residues 1 to 76 (MTTQVPPHSV…GILLLLAGLT (76 aa)). 3 consecutive transmembrane segments (helical) span residues 56–76 (VLAVLAGLPVGGILLLLAGLT), 90–110 (LFVLFSPVLVPATVAIGLAVA), and 111–131 (GFLTSGAFGLTALSSFSWILN). The segment at 77 to 130 (LAGTLTGLAVATPLFVLFSPVLVPATVAIGLAVAGFLTSGAFGLTALSSFSWIL) is hydrophobic. Repeat copies occupy residues 159 to 165 (GQKTKEV), 166 to 173 (GQKTKEVG), 184 to 191 (REAAARDA), 192 to 199 (REAAARDA), and 200 to 207 (REAAARDA). Residues 159–173 (GQKTKEVGQKTKEVG) form a 2 X 7 AA tandem repeats region. Basic and acidic residues-rich tracts occupy residues 164–173 (EVGQKTKEVG) and 181–216 (QDTREAAARDAREAAARDAREAAARDAKVEARDVKR). A disordered region spans residues 164 to 226 (EVGQKTKEVG…TTVTATTATA (63 aa)). The 3 X 8 AA tandem repeats stretch occupies residues 184-207 (REAAARDAREAAARDAREAAARDA). Low complexity predominate over residues 217–226 (TTVTATTATA).

This sequence belongs to the oleosin family.

The protein resides in the lipid droplet. The protein localises to the membrane. May have a structural role to stabilize the lipid body during desiccation of the seed by preventing coalescence of the oil. Probably interacts with both lipid and phospholipid moieties of lipid bodies. May also provide recognition signals for specific lipase anchorage in lipolysis during seedling growth. The sequence is that of P24 oleosin isoform A from Glycine max (Soybean).